A 125-amino-acid polypeptide reads, in one-letter code: Fumarate reductase subunit D (125 aa).

Transmembrane regions (helical) follow at residues 30 to 50 (FAMITPVTVLVLGILVPMGVI), 60 to 80 (VVSFATSIIGALFIIATLALP), and 105 to 125 (IACYAIAGLISALAVVFIFML).

The protein belongs to the FrdD family. Part of an enzyme complex containing four subunits: a flavoprotein (FrdA), an iron-sulfur protein (FrdB), and two hydrophobic anchor proteins (FrdC and FrdD).

It is found in the cell inner membrane. In terms of biological role, anchors the catalytic components of the fumarate reductase complex to the cell membrane, binds quinones. The protein is Fumarate reductase subunit D of Vibrio vulnificus (strain YJ016).